The chain runs to 108 residues: MTPDVLKNIADTLEARREAAPQSSYVASLFHKGEDAILKKVAEEAAETLMASKDKDKLHLVREVADLWFHTMVLLTYHGLRPEDVVMELHRREGISGLDEKASRKPTA.

The protein belongs to the PRA-PH family.

It is found in the cytoplasm. It catalyses the reaction 1-(5-phospho-beta-D-ribosyl)-ATP + H2O = 1-(5-phospho-beta-D-ribosyl)-5'-AMP + diphosphate + H(+). It functions in the pathway amino-acid biosynthesis; L-histidine biosynthesis; L-histidine from 5-phospho-alpha-D-ribose 1-diphosphate: step 2/9. The protein is Phosphoribosyl-ATP pyrophosphatase of Chromobacterium violaceum (strain ATCC 12472 / DSM 30191 / JCM 1249 / CCUG 213 / NBRC 12614 / NCIMB 9131 / NCTC 9757 / MK).